Here is a 4451-residue protein sequence, read N- to C-terminus: Gramicidin S synthase 2 (4451 aa).

Residues 467–1044 (DKTIHQLFTE…IQEISNYING (578 aa)) are domain 1 (proline-activating). 4 consecutive Carrier domains span residues 971 to 1046 (VPTN…NGAK), 2006 to 2081 (APSS…ADGQ), 3052 to 3127 (RPRT…EETD), and 4090 to 4165 (APRN…THQE). O-(pantetheine 4'-phosphoryl)serine is present on residues Ser-1006, Ser-2041, Ser-3087, and Ser-4125. A domain 2 (valine-activating) region spans residues 1521–2080 (DHVAVGWKDQ…SALAQYIADG (560 aa)). The interval 2538 to 3135 (YATNKIFHEL…TDTEQYMAIQ (598 aa)) is domain 3 (ornithine-activating). Positions 3591–4173 (IQELFEEQVK…QESENNVHQP (583 aa)) are domain 4 (leucine-activating).

This sequence belongs to the ATP-dependent AMP-binding enzyme family. Large multienzyme complex of GrsA and GrsB. Pantetheine 4'-phosphate is required as a cofactor.

Its pathway is antibiotic biosynthesis; gramicidin S biosynthesis. Functionally, this protein is a multifunctional enzyme, able to activate and polymerize the amino acids Pro, Val, Orn and Leu. Activation sites for these AA consist of individual domains. In Aneurinibacillus migulanus (Bacillus migulanus), this protein is Gramicidin S synthase 2 (grsB).